Reading from the N-terminus, the 623-residue chain is Isocitrate dehydrogenase kinase/phosphatase (623 aa).

ATP-binding positions include 344 to 350 (APGIKGM) and Lys-365. Residue Asp-400 is part of the active site.

It belongs to the AceK family.

The protein resides in the cytoplasm. The catalysed reaction is L-seryl-[isocitrate dehydrogenase] + ATP = O-phospho-L-seryl-[isocitrate dehydrogenase] + ADP + H(+). Its function is as follows. Bifunctional enzyme which can phosphorylate or dephosphorylate isocitrate dehydrogenase (IDH) on a specific serine residue. This is a regulatory mechanism which enables bacteria to bypass the Krebs cycle via the glyoxylate shunt in response to the source of carbon. When bacteria are grown on glucose, IDH is fully active and unphosphorylated, but when grown on acetate or ethanol, the activity of IDH declines drastically concomitant with its phosphorylation. The sequence is that of Isocitrate dehydrogenase kinase/phosphatase from Polaromonas naphthalenivorans (strain CJ2).